The sequence spans 312 residues: L-lactate dehydrogenase (312 aa).

NAD(+)-binding positions include Val11, Asp32, Arg37, and Gly76–Ala77. Substrate is bound by residues Gln79, Arg85, and Asn117–Asp120. NAD(+)-binding positions include Val115–Asn117 and Thr140. Asp145 to Arg148 contacts substrate. Arg150 and His165 together coordinate beta-D-fructose 1,6-bisphosphate. The active-site Proton acceptor is His172. Tyr217 bears the Phosphotyrosine mark. Thr226 contributes to the substrate binding site.

The protein belongs to the LDH/MDH superfamily. LDH family. In terms of assembly, homotetramer.

It is found in the cytoplasm. The catalysed reaction is (S)-lactate + NAD(+) = pyruvate + NADH + H(+). It participates in fermentation; pyruvate fermentation to lactate; (S)-lactate from pyruvate: step 1/1. Its activity is regulated as follows. Allosterically activated by fructose 1,6-bisphosphate (FBP). Catalyzes the conversion of lactate to pyruvate. The chain is L-lactate dehydrogenase from Pseudothermotoga lettingae (strain ATCC BAA-301 / DSM 14385 / NBRC 107922 / TMO) (Thermotoga lettingae).